Reading from the N-terminus, the 492-residue chain is GPI alpha-1,6-mannosyltransferase 2 (492 aa).

The Cytoplasmic segment spans residues 1–13 (MGLLDPSQKEVLK). Residues 14-34 (FAVSCRILTLVLQALFNIIIP) form a helical membrane-spanning segment. Residues 35 to 77 (DHHADAFSPPRLAPSGSVDQLVEALLGGLSRWDAEHFLFIAEH) are Lumenal-facing. Residues 78 to 98 (GYLYEHNFAFFPGFPLALLMG) traverse the membrane as a helical segment. Residues 99-113 (TELLRPLQGLLSERS) are Cytoplasmic-facing. A helical membrane pass occupies residues 114 to 134 (CLLVSVALLNSLFSVLAAVAL). Over 135–136 (HD) the chain is Lumenal. The chain crosses the membrane as a helical span at residues 137 to 157 (LGCLVLHCPRQAFCAALLFCL). Over 158–161 (SPAN) the chain is Cytoplasmic. A helical transmembrane segment spans residues 162-182 (VFLAAGYSEALFAFLTFSAMG). Topologically, residues 183-192 (QLERGRGWAS) are lumenal. A helical membrane pass occupies residues 193-213 (GLLFALAAGVRSNGLVSVGFL). Residues 214–234 (LHSQCRGFCSSLVVLDPLKGL) are Cytoplasmic-facing. The helical transmembrane segment at 235–255 (VKLMASLCLSVLTVSLPFALF) threads the bilayer. The Lumenal portion of the chain corresponds to 256-327 (QYYAYTQFCF…RYYELRQVPN (72 aa)). Residues 328-348 (FLLATPVTVLVVWATWTYVTA) traverse the membrane as a helical segment. Over 349 to 378 (HPWLCLTLGLQRTKDRESLEKPHPGFLSAK) the chain is Cytoplasmic. Residues 379–399 (VFVYLVHAAALLAFGGLCMHV) form a helical membrane-spanning segment. Topologically, residues 400 to 468 (QVLTRLLGSS…NWKTCSPVTK (69 aa)) are lumenal. Residues 469-489 (CILVYFLTYWLLGLIMHCNFL) form a helical membrane-spanning segment. Residues 490–492 (PWT) lie on the Cytoplasmic side of the membrane.

The protein belongs to the PIGV family. Post-translationally, not N-glycosylated.

Its subcellular location is the endoplasmic reticulum membrane. It functions in the pathway glycolipid biosynthesis; glycosylphosphatidylinositol-anchor biosynthesis. In terms of biological role, alpha-1,6-mannosyltransferase that catalyzes the transfer of the second mannose, via an alpha-1,6 bond, from a dolichol-phosphate-mannose (Dol-P-Man) to the alpha-D-Man-(1-&gt;4)-alpha-D-GlcN-(1-&gt;6)-(1-radyl,2-acyl-sn-glycero-3-phospho)-2-acyl-inositol (also termed H2) intermediate to generate an alpha-D-Man-(1-&gt;6)-alpha-D-Man-(1-&gt;4)-alpha-D-GlcN-(1-&gt;6)-(1-radyl,2-acyl-sn-glycero-3-phospho)-2-acyl-inositol (also termed H3) and participates in the seventh step of the glycosylphosphatidylinositol-anchor biosynthesis. Also transfers the second mannose on a 2-PEtn-alpha-D-Man-(1-&gt;4)-alpha-D-GlcN-(1-&gt;6)-(1-radyl,2-acyl-sn-glycero-3-phospho)-2-acyl-inositol (also termed H5). The sequence is that of GPI alpha-1,6-mannosyltransferase 2 from Rattus norvegicus (Rat).